The following is a 284-amino-acid chain: MEAIKKKMQAMKLEKDNAIDRAEIAEQKARDANLRAEKSEEEVRGLQKKIQQIENELDQVQEQLSAANTKLEEKKKALQTAEGDVAALNRRIQLIEEDLERSEERLKIATAKLEEASQSADESERMRKMLEHRSITDEERMDGLENQLKEARMMAEDADRKYDEVARKLAMVEADLERAEERAETGESKIVELEEELRVVGNNLKSLEVSEEKAQQREEAHEQQIRIMTAKLKEAEARAEFAERSVQKLQKEVDRLEDELVHEKEKYKSISDELDQTFAELTGY.

Residues 1–273 adopt a coiled-coil conformation; that stretch reads MEAIKKKMQA…KEKYKSISDE (273 aa).

It belongs to the tropomyosin family. As to quaternary structure, homodimer. As to expression, ubiquitous, but especially prevalent in the anterior muscle bundles associated with legs. Expression in the mid and posterior regions is probably related to the numerous, small muscle bundles associated with the digestive and reproductive systems (at protein level).

Its function is as follows. Tropomyosin, in association with the troponin complex, plays a central role in the calcium dependent regulation of muscle contraction. In Psoroptes ovis (Sheep scab mite), this protein is Tropomyosin.